Here is a 374-residue protein sequence, read N- to C-terminus: Chaperone protein DnaJ (374 aa).

In terms of domain architecture, J spans 5 to 70; the sequence is DYYEVLGVER…NKRAAYDQYG (66 aa). The CR-type zinc-finger motif lies at 133–211; that stretch reads GTSVNIRVPT…CHGEGRVEEY (79 aa). C146, C149, C163, C166, C185, C188, C199, and C202 together coordinate Zn(2+). CXXCXGXG motif repeat units follow at residues 146–153, 163–170, 185–192, and 199–206; these read CKPCDGSG, CPTCGGIG, CPRCHGQG, and CDSCHGEG.

The protein belongs to the DnaJ family. In terms of assembly, homodimer. Requires Zn(2+) as cofactor.

The protein localises to the cytoplasm. Its function is as follows. Participates actively in the response to hyperosmotic and heat shock by preventing the aggregation of stress-denatured proteins and by disaggregating proteins, also in an autonomous, DnaK-independent fashion. Unfolded proteins bind initially to DnaJ; upon interaction with the DnaJ-bound protein, DnaK hydrolyzes its bound ATP, resulting in the formation of a stable complex. GrpE releases ADP from DnaK; ATP binding to DnaK triggers the release of the substrate protein, thus completing the reaction cycle. Several rounds of ATP-dependent interactions between DnaJ, DnaK and GrpE are required for fully efficient folding. Also involved, together with DnaK and GrpE, in the DNA replication of plasmids through activation of initiation proteins. This chain is Chaperone protein DnaJ, found in Pseudomonas fluorescens (strain SBW25).